The primary structure comprises 394 residues: Phosphopentomutase (394 aa).

Residues aspartate 13, aspartate 286, histidine 291, aspartate 327, histidine 328, and histidine 339 each coordinate Mn(2+).

This sequence belongs to the phosphopentomutase family. It depends on Mn(2+) as a cofactor.

It is found in the cytoplasm. The catalysed reaction is 2-deoxy-alpha-D-ribose 1-phosphate = 2-deoxy-D-ribose 5-phosphate. The enzyme catalyses alpha-D-ribose 1-phosphate = D-ribose 5-phosphate. It functions in the pathway carbohydrate degradation; 2-deoxy-D-ribose 1-phosphate degradation; D-glyceraldehyde 3-phosphate and acetaldehyde from 2-deoxy-alpha-D-ribose 1-phosphate: step 1/2. Its function is as follows. Isomerase that catalyzes the conversion of deoxy-ribose 1-phosphate (dRib-1-P) and ribose 1-phosphate (Rib-1-P) to deoxy-ribose 5-phosphate (dRib-5-P) and ribose 5-phosphate (Rib-5-P), respectively. The polypeptide is Phosphopentomutase (Bacillus cereus (strain AH187)).